We begin with the raw amino-acid sequence, 339 residues long: Phenylalanine--tRNA ligase alpha subunit (339 aa).

A Mg(2+)-binding site is contributed by Glu254.

The protein belongs to the class-II aminoacyl-tRNA synthetase family. Phe-tRNA synthetase alpha subunit type 1 subfamily. Tetramer of two alpha and two beta subunits. Requires Mg(2+) as cofactor.

Its subcellular location is the cytoplasm. It carries out the reaction tRNA(Phe) + L-phenylalanine + ATP = L-phenylalanyl-tRNA(Phe) + AMP + diphosphate + H(+). The sequence is that of Phenylalanine--tRNA ligase alpha subunit from Clostridium botulinum (strain Alaska E43 / Type E3).